The sequence spans 780 residues: RNA-binding protein Pasilla (780 aa).

Disordered regions lie at residues 31–50, 76–113, and 150–190; these read LQHQ…QQLE, QPRH…SSSI, and QIES…ATAS. Composition is skewed to low complexity over residues 79–91, 99–113, and 176–190; these read HSTT…STHS, SSNS…SSSI, and PNGT…ATAS. 3 KH domains span residues 273–340, 366–432, and 691–758; these read TYHM…MEFI, DKQV…CKMI, and KDSK…QYLI. Residues 674-693 are disordered; that stretch reads AQLGGLSKSPTPGDLSSKDS. A required for RNA binding region spans residues 686–776; the sequence is GDLSSKDSKN…TKRARQIPLT (91 aa).

As to expression, expressed in the central nervous system in mushroom body neurons (at protein level).

The protein resides in the nucleus. The protein localises to the cytoplasm. In terms of biological role, functions to regulate alternative splicing in neurons by binding pre-mRNA in a sequence-specific manner to activate exon inclusion. Plays a role in long-term memory formation by processing the unspliced Orb2-isoform A (Orb2A) mRNA and thereby controlling Orb2A protein abundance. The protein is RNA-binding protein Pasilla of Drosophila melanogaster (Fruit fly).